We begin with the raw amino-acid sequence, 777 residues long: Elongation factor G, mitochondrial (777 aa).

In terms of domain architecture, tr-type G spans 34-338 (LRQRNVGISA…GMCAYLPNPM (305 aa)). GTP-binding positions include 43–50 (AHIDSGKT), 136–140 (DTPGH), and 190–193 (NKMD).

The protein belongs to the TRAFAC class translation factor GTPase superfamily. Classic translation factor GTPase family. EF-G/EF-2 subfamily.

The protein localises to the mitochondrion. It participates in protein biosynthesis; polypeptide chain elongation. Functionally, mitochondrial GTPase that catalyzes the GTP-dependent ribosomal translocation step during translation elongation. During this step, the ribosome changes from the pre-translocational (PRE) to the post-translocational (POST) state as the newly formed A-site-bound peptidyl-tRNA and P-site-bound deacylated tRNA move to the P and E sites, respectively. Catalyzes the coordinated movement of the two tRNA molecules, the mRNA and conformational changes in the ribosome. This chain is Elongation factor G, mitochondrial, found in Malassezia globosa (strain ATCC MYA-4612 / CBS 7966) (Dandruff-associated fungus).